Here is a 364-residue protein sequence, read N- to C-terminus: Inactive protein RESTRICTED TEV MOVEMENT 2 (364 aa).

The 108-residue stretch at 14 to 121 (VQYEDFVPKS…LPETSRTEAA (108 aa)) folds into the sHSP domain. The A-1 repeat unit spans residues 129–133 (LEEKR). Residues 129–220 (LEEKRLLEES…LEERRLEERK (92 aa)) are 6 X 5 AA repeats A of L-E-E-[SKR]-[ERK]. The stretch at 135-139 (LEESR) is one A-2 repeat. The A-3 repeat unit spans residues 156–160 (LEEKE). Residues 163–176 (IRKLQEEAKAKEEA) form a B-1 repeat. A 3 X 14 AA repeats B of [IMA]-[RK]-K-L-Q-E-E-A-K-A-K-E-[EK]-[LA] region spans residues 163–206 (IRKLQEEAKAKEEAEMRKLQEEAKAKEEAAAKKLQEEIEAKEKL). Residues 178 to 191 (MRKLQEEAKAKEEA) form a B-2 repeat. A B-3 repeat occupies 193–205 (AKKLQEEIEAKEK). The stretch at 206 to 210 (LEERK) is one A-4 repeat. An A-5 repeat occupies 211-215 (LEERR). One copy of the A-6 repeat lies at 216–220 (LEERK). A helical membrane pass occupies residues 322 to 342 (LMMNVGVAALVIFALGAYVSY). Residues 345 to 364 (CSSSSSSSSPSSSSSSTKPE) are disordered. Over residues 346 to 364 (SSSSSSSSPSSSSSSTKPE) the composition is skewed to low complexity.

Belongs to the small heat shock protein (HSP20) family.

The protein resides in the cell membrane. Functionally, seems to not be involved in heat resistance. Unable to mediate restriction of long-distance movement of the pathogenic tobacco etch virus (TEV) without causing a hypersensitive response or inducing systemic acquired resistance. The sequence is that of Inactive protein RESTRICTED TEV MOVEMENT 2 (RTM2) from Arabidopsis thaliana (Mouse-ear cress).